A 209-amino-acid chain; its full sequence is D-aminoacyl-tRNA deacylase 1 (209 aa).

Mg(2+)-binding residues include V4, Q6, and C28. Residues 139–140 carry the Gly-cisPro motif, important for rejection of L-amino acids motif; it reads GP. A disordered region spans residues 142–209; the sequence is TIELESPAPG…EGDVSSEREP (68 aa). Composition is skewed to basic and acidic residues over residues 159 to 170 and 181 to 194; these read QLSKLEKQQQRK and SSKE…EDRS. 3 positions are modified to phosphoserine: S197, S204, and S205.

It belongs to the DTD family. In terms of assembly, homodimer. Interacts with CDC45 and TOPBP1. Post-translationally, preferentially phosphorylated in cells arrested early in S phase. Phosphorylation in the C-terminus weakens the interaction with CDC45. Expressed in many adult and fetal tissues. Highest levels in testis, ovary, spleen and in adult and fetal brain.

The protein resides in the nucleus. The protein localises to the cytoplasm. The enzyme catalyses glycyl-tRNA(Ala) + H2O = tRNA(Ala) + glycine + H(+). It carries out the reaction a D-aminoacyl-tRNA + H2O = a tRNA + a D-alpha-amino acid + H(+). Possible ATPase involved in DNA replication, may facilitate loading of CDC45 onto pre-replication complexes. In terms of biological role, an aminoacyl-tRNA editing enzyme that deacylates mischarged D-aminoacyl-tRNAs. Also deacylates mischarged glycyl-tRNA(Ala), protecting cells against glycine mischarging by AlaRS. Acts via tRNA-based rather than protein-based catalysis; rejects L-amino acids rather than detecting D-amino acids in the active site. By recycling D-aminoacyl-tRNA to D-amino acids and free tRNA molecules, this enzyme counteracts the toxicity associated with the formation of D-aminoacyl-tRNA entities in vivo and helps enforce protein L-homochirality. The sequence is that of D-aminoacyl-tRNA deacylase 1 (DTD1) from Homo sapiens (Human).